The sequence spans 243 residues: Outer membrane protein A (243 aa).

A run of 5 beta stranded transmembrane segments spans residues Leu1–Pro8, Leu13–Gly21, Pro48–Ala57, Trp62–Gln69, and Met88–Arg96. Tandem repeats lie at residues Ala104–Pro105, Ala106–Pro107, Ala108–Pro109, Ala110–Pro111, and Ala112–Pro113. A 5 X 2 AA tandem repeats of A-P region spans residues Ala104–Pro113. The 129-residue stretch at Val115–Ile243 folds into the OmpA-like domain. The cysteines at positions 215 and 229 are disulfide-linked.

It belongs to the outer membrane OOP (TC 1.B.6) superfamily. OmpA family. In terms of assembly, monomer and homodimer.

Its subcellular location is the cell outer membrane. With TolR probably plays a role in maintaining the position of the peptidoglycan cell wall in the periplasm. Acts as a porin with low permeability that allows slow penetration of small solutes; an internal gate slows down solute passage. The protein is Outer membrane protein A of Serratia odorifera.